Consider the following 219-residue polypeptide: Charged multivesicular body protein 5 (219 aa).

Positions 1–10 are enriched in basic residues; that stretch reads MNRFFGKAKP. The segment at 1–21 is disordered; the sequence is MNRFFGKAKPKAPPPSLTDCI. A coiled-coil region spans residues 26–179; sequence SRAESIDKKI…LGDELLADED (154 aa). Ser86 carries the post-translational modification Phosphoserine. The disordered stretch occupies residues 188-219; that stretch reads SAPAIPEGVPTDTKNKDGVLVDEFGLPQIPAS.

Belongs to the SNF7 family. In terms of assembly, probable peripherally associated component of the endosomal sorting required for transport complex III (ESCRT-III). ESCRT-III components are thought to multimerize to form a flat lattice on the perimeter membrane of the endosome. Several assembly forms of ESCRT-III may exist that interact and act sequentially. Interacts with VTA1. Interacts with CHMP2A. Interacts with VTA1; the interaction involves soluble CHMP5. Interacts with NOD2. Interacts with BROX. In terms of processing, ISGylated. Isgylation inhibits its interaction with VTA1.

The protein resides in the cytoplasm. It is found in the cytosol. It localises to the endosome membrane. Its subcellular location is the midbody. In terms of biological role, probable peripherally associated component of the endosomal sorting required for transport complex III (ESCRT-III) which is involved in multivesicular bodies (MVBs) formation and sorting of endosomal cargo proteins into MVBs. MVBs contain intraluminal vesicles (ILVs) that are generated by invagination and scission from the limiting membrane of the endosome and mostly are delivered to lysosomes enabling degradation of membrane proteins, such as stimulated growth factor receptors, lysosomal enzymes and lipids. The MVB pathway appears to require the sequential function of ESCRT-O, -I,-II and -III complexes. ESCRT-III proteins mostly dissociate from the invaginating membrane before the ILV is released. The ESCRT machinery also functions in topologically equivalent membrane fission events, such as the terminal stages of cytokinesis. ESCRT-III proteins are believed to mediate the necessary vesicle extrusion and/or membrane fission activities, possibly in conjunction with the AAA ATPase VPS4. In Mus musculus (Mouse), this protein is Charged multivesicular body protein 5 (Chmp5).